We begin with the raw amino-acid sequence, 101 residues long: Glutaredoxin-1 (101 aa).

The 97-residue stretch at 5–101 (KDRVEKLIQT…GSLSKMIAAL (97 aa)) folds into the Glutaredoxin domain. A disulfide bridge connects residues Cys25 and Cys28.

The protein belongs to the glutaredoxin family.

The protein localises to the cytoplasm. Its subcellular location is the cytosol. Multifunctional enzyme with glutathione-dependent oxidoreductase, glutathione peroxidase and glutathione S-transferase (GST) activity. The disulfide bond functions as an electron carrier in the glutathione-dependent synthesis of deoxyribonucleotides by the enzyme ribonucleotide reductase. In addition, it is also involved in reducing cytosolic protein- and non-protein-disulfides in a coupled system with glutathione reductase. May play a role in protection against oxidative stress caused by superoxide in vivo by regulating the redox state of the protein sulfhydryl groups. The chain is Glutaredoxin-1 from Rhizophagus irregularis (strain DAOM 181602 / DAOM 197198 / MUCL 43194) (Arbuscular mycorrhizal fungus).